We begin with the raw amino-acid sequence, 292 residues long: Claudin-23 (292 aa).

The Cytoplasmic segment spans residues 1–3 (MRT). The helical transmembrane segment at 4–24 (PVVMTLGMVLAPCGLLLNLTG) threads the bilayer. Residues 25–81 (TLAPGWRLVKGFLNQPVDVELYQGLWDMCREQSSRERECGQTDQWGYFEAQPVLVAR) are Extracellular-facing. Residues 82-102 (ALMVTSLAATVLGLLLASLGV) traverse the membrane as a helical segment. The Cytoplasmic segment spans residues 103 to 110 (RCWQDEPN). A helical transmembrane segment spans residues 111–131 (FVLAGLSGVVLFVAGLLGLIP). At 132-160 (VSWYNHFLGDRDVLPAPASPVTVQVSYSL) the chain is on the extracellular side. The helical transmembrane segment at 161 to 181 (VLGYLGSCLLLLGGFSLALSF) threads the bilayer. The Cytoplasmic segment spans residues 182-292 (APWCDERCRR…DSSLPCDSDL (111 aa)). The disordered stretch occupies residues 222 to 292 (KYYSDGQHRP…DSSLPCDSDL (71 aa)). A compositionally biased stretch (polar residues) spans 273 to 282 (DAPSCSTHPC).

This sequence belongs to the claudin family. Expressed in germinal center B-cells, placenta, stomach as well as in colon tumor.

The protein resides in the cell junction. It is found in the tight junction. The protein localises to the cell membrane. Functionally, plays a major role in tight junction-specific obliteration of the intercellular space, through calcium-independent cell-adhesion activity. In Homo sapiens (Human), this protein is Claudin-23 (CLDN23).